The sequence spans 502 residues: Lysine--tRNA ligase (502 aa).

2 residues coordinate Mg(2+): Glu-413 and Glu-420.

The protein belongs to the class-II aminoacyl-tRNA synthetase family. As to quaternary structure, homodimer. The cofactor is Mg(2+).

It localises to the cytoplasm. The catalysed reaction is tRNA(Lys) + L-lysine + ATP = L-lysyl-tRNA(Lys) + AMP + diphosphate. The chain is Lysine--tRNA ligase from Haemophilus influenzae (strain PittGG).